Reading from the N-terminus, the 91-residue chain is Large ribosomal subunit protein eL43 (91 aa).

A C4-type zinc finger spans residues C39–C60.

The protein belongs to the eukaryotic ribosomal protein eL43 family.

In Caenorhabditis elegans, this protein is Large ribosomal subunit protein eL43.